Here is a 100-residue protein sequence, read N- to C-terminus: Small ribosomal subunit protein uS14 (100 aa).

It belongs to the universal ribosomal protein uS14 family. As to quaternary structure, part of the 30S ribosomal subunit. Contacts proteins S3 and S10.

Binds 16S rRNA, required for the assembly of 30S particles and may also be responsible for determining the conformation of the 16S rRNA at the A site. This chain is Small ribosomal subunit protein uS14, found in Prochlorococcus marinus (strain MIT 9215).